The primary structure comprises 382 residues: Regulatory protein RapC (382 aa).

5 TPR repeats span residues 102–138 (YYVNFFRGMYEFDKREFISAITYYKQAEKKLSFVADH), 149–182 (AEAYYYMKQTYFSLINIKNAYEIYVEQETYNVRI), 183–216 (IQCHFVFGVNLMDERNFEQAARHFKLALNMAQAE), 223–256 (GRAYYNLGLCYYNQDLLDPAIDYFEKAVSTFESS), and 263–296 (PQAYFLITLIYYKQGKHDKASEYHKRGYEYAKET).

The protein belongs to the Rap family. Homodimer. Interacts specifically with the C-terminal DNA-binding domain of ComA. Interacts with CSF.

It is found in the cytoplasm. With respect to regulation, inhibited by the competence and sporulation stimulating factor (CSF), encoded by phrC, which prevents RapC-ComA interaction. Its function is as follows. Involved in the regulation of genetic competence development. Inhibits the activity of ComA, a transcriptional factor that regulates the development of genetic competence. Acts by binding to ComA, independently of its phosphorylation state, leading to the inhibition of ComA DNA-binding activity. Does not dephosphorylate phospho-ComA and does not affect the phosphorylation level of the ComP-ComA system. The polypeptide is Regulatory protein RapC (rapC) (Bacillus subtilis (strain 168)).